The following is a 195-amino-acid chain: 4'-phosphopantetheinyl transferase AcpT (195 aa).

This sequence belongs to the P-Pant transferase superfamily. Gsp/Sfp/HetI/AcpT family.

The enzyme catalyses apo-[ACP] + CoA = holo-[ACP] + adenosine 3',5'-bisphosphate + H(+). May be involved in an alternative pathway for phosphopantetheinyl transfer and holo-ACP synthesis in E.coli. The native apo-protein substrate is unknown. Is able to functionally replace AcpS in vivo but only when expressed at high levels. This Escherichia coli (strain K12) protein is 4'-phosphopantetheinyl transferase AcpT.